Reading from the N-terminus, the 171-residue chain is Small ribosomal subunit protein uS5 (171 aa).

Positions Leu14–Ile77 constitute an S5 DRBM domain.

It belongs to the universal ribosomal protein uS5 family. In terms of assembly, part of the 30S ribosomal subunit. Contacts proteins S4 and S8.

Its function is as follows. With S4 and S12 plays an important role in translational accuracy. In terms of biological role, located at the back of the 30S subunit body where it stabilizes the conformation of the head with respect to the body. The chain is Small ribosomal subunit protein uS5 from Karelsulcia muelleri (strain GWSS) (Sulcia muelleri).